A 165-amino-acid chain; its full sequence is Molybdopterin synthase catalytic subunit (165 aa).

Residues 42–44 (WVR), 109–110 (HR), lysine 125, and 132–134 (KLE) each bind substrate.

The protein belongs to the MoaE family. In terms of assembly, heterotetramer of 2 MoaD subunits and 2 MoaE subunits. Also stable as homodimer. The enzyme changes between these two forms during catalysis.

It catalyses the reaction 2 [molybdopterin-synthase sulfur-carrier protein]-C-terminal-Gly-aminoethanethioate + cyclic pyranopterin phosphate + H2O = molybdopterin + 2 [molybdopterin-synthase sulfur-carrier protein]-C-terminal Gly-Gly + 2 H(+). The protein operates within cofactor biosynthesis; molybdopterin biosynthesis. Functionally, converts molybdopterin precursor Z into molybdopterin. This requires the incorporation of two sulfur atoms into precursor Z to generate a dithiolene group. The sulfur is provided by MoaD. The chain is Molybdopterin synthase catalytic subunit (moaE) from Synechococcus elongatus (strain ATCC 33912 / PCC 7942 / FACHB-805) (Anacystis nidulans R2).